We begin with the raw amino-acid sequence, 400 residues long: Unsaturated glucuronyl hydrolase (400 aa).

An N-terminal signal peptide occupies residues 1–20; the sequence is MRKLVYLVLVLGLTFLNVRC. The active-site Nucleophile is Asp-120. Asp-181 (proton donor) is an active-site residue.

This sequence belongs to the glycosyl hydrolase 88 family.

It is found in the cell surface. Functionally, unsaturated glucuronyl hydrolase involved in ulvan degradation. Ulvan is the main polysaccharide component of the Ulvales (green seaweed) cell wall. It is composed of disaccharide building blocks comprising 3-sulfated rhamnose (Rha3S) linked to D-glucuronic acid (GlcA), L-iduronic acid (IduA), or D-xylose (Xyl). Unsaturated glucuronyl hydrolase catalyzes the cleavage of the unsaturated 4-deoxy-L-threo-hex-4-enopyranosiduronic acid (deltaUA) at the non-reducing end of ulvan oligomers, thus forming 5-dehydro-4-deoxy-D-glucuronate. The sequence is that of Unsaturated glucuronyl hydrolase from Formosa agariphila (strain DSM 15362 / KCTC 12365 / LMG 23005 / KMM 3901 / M-2Alg 35-1).